A 572-amino-acid polypeptide reads, in one-letter code: Probable D-xylulose kinase A (572 aa).

Positions 95, 166, 282, and 283 each coordinate substrate. ATP contacts are provided by residues W365, 470 to 471 (GG), and N474.

This sequence belongs to the FGGY kinase family.

It is found in the cytoplasm. It catalyses the reaction D-xylulose + ATP = D-xylulose 5-phosphate + ADP + H(+). In terms of biological role, highly specific D-xylulose kinase which participates in the catabolism of xylose. Xylose is a major component of hemicelluloses such as xylan. Most fungi utilize D-xylose via three enzymatic reactions, xylose reductase (XR), xylitol dehydrogenase (XDH), and xylulokinase, to form xylulose 5-phosphate, which enters pentose phosphate pathway. The protein is Probable D-xylulose kinase A (xkiA) of Aspergillus oryzae (strain ATCC 42149 / RIB 40) (Yellow koji mold).